Consider the following 597-residue polypeptide: Putative diflavin flavoprotein A 3 (597 aa).

Residues 59 to 254 (QRGTTANSYL…YPAQTYAPSH (196 aa)) are zinc metallo-hydrolase. Positions 283-421 (VALIYASAYG…MCEEAGTDFA (139 aa)) constitute a Flavodoxin-like domain. A flavodoxin-reductase-like region spans residues 449–597 (LGRLVGSLCV…VHHRKSGDHY (149 aa)).

This sequence in the N-terminal section; belongs to the zinc metallo-hydrolase group 3 family. In the C-terminal section; belongs to the flavodoxin reductase family. Requires Fe cation as cofactor.

Its function is as follows. Mediates electron transfer from NADH to oxygen, reducing it to water. This modular protein has 3 redox cofactors, in other organisms the same activity requires 2 or 3 proteins. In Synechocystis sp. (strain ATCC 27184 / PCC 6803 / Kazusa), this protein is Putative diflavin flavoprotein A 3 (dfa3).